Reading from the N-terminus, the 188-residue chain is Auxin-induced protein 22C (188 aa).

Positions 13–17 (LRLGL) match the EAR-like (transcriptional repression) motif. A disordered region spans residues 16-57 (GLPGAGGENNTDKDKNKNKKRVFSDIEGENSSSEEDGKKETK). The PB1 domain occupies 79-167 (KLYVKVSMDG…KRLRIMKRSD (89 aa)).

This sequence belongs to the Aux/IAA family. In terms of assembly, homodimers and heterodimers.

It is found in the nucleus. Functionally, aux/IAA proteins are short-lived transcriptional factors that function as repressors of early auxin response genes at low auxin concentrations. Repression is thought to result from the interaction with auxin response factors (ARFs), proteins that bind to the auxin-responsive promoter element (AuxRE). Formation of heterodimers with ARF proteins may alter their ability to modulate early auxin response genes expression. The sequence is that of Auxin-induced protein 22C (AUX22C) from Vigna radiata var. radiata (Mung bean).